The following is a 332-amino-acid chain: Ribosomal RNA small subunit methyltransferase C (332 aa).

Belongs to the methyltransferase superfamily. RsmC family. Monomer.

Its subcellular location is the cytoplasm. The catalysed reaction is guanosine(1207) in 16S rRNA + S-adenosyl-L-methionine = N(2)-methylguanosine(1207) in 16S rRNA + S-adenosyl-L-homocysteine + H(+). Its function is as follows. Specifically methylates the guanine in position 1207 of 16S rRNA in the 30S particle. This Pseudomonas fluorescens (strain ATCC BAA-477 / NRRL B-23932 / Pf-5) protein is Ribosomal RNA small subunit methyltransferase C.